A 274-amino-acid chain; its full sequence is Speedy protein C (274 aa).

Positions 37–169 are speedy/Ringo box; Required for CDK-binding; sequence HQEVQAFLSL…FHWAWTRDRR (133 aa).

Belongs to the Speedy/Ringo family. Interacts with CDK1 and CDK2. Interacts with AURKB. As to expression, expressed in a variety of tissues including bone marrow, kidney, small intestine, liver, placenta and testis.

The protein localises to the cytoplasm. Its function is as follows. Promotes progression through the cell cycle via binding and activation of CDK1 and CDK2. Involved in the spindle-assembly checkpoint. Required for recruitment of MAD2L1, BUBR1 and BUB1 to kinetochores. Required for the correct localization of the active form of Aurora B in prometaphase. The protein is Speedy protein C of Homo sapiens (Human).